We begin with the raw amino-acid sequence, 153 residues long: Regulatory protein RecX (153 aa).

It belongs to the RecX family.

It localises to the cytoplasm. Modulates RecA activity. The protein is Regulatory protein RecX of Mannheimia succiniciproducens (strain KCTC 0769BP / MBEL55E).